A 206-amino-acid chain; its full sequence is Ras-related protein RABG3f (206 aa).

Position 15 to 23 (15 to 23) interacts with GTP; it reads GDSGVGKTS. An Effector region motif is present at residues 37 to 45; sequence YKATIGADF. GTP is bound by residues 63–67, 125–128, and 158–159; these read DTAGQ, NKVD, and SA. Residues Cys-204 and Cys-206 are each lipidated (S-geranylgeranyl cysteine). A Cysteine methyl ester modification is found at Cys-206.

The protein belongs to the small GTPase superfamily. Rab family. Interacts with VPS35A.

It is found in the endosome membrane. The protein localises to the vacuole membrane. The protein resides in the prevacuolar compartment membrane. Regulated by guanine nucleotide exchange factors (GEFs) which promote the exchange of bound GDP for free GTP. Regulated by the MON1-CCZ1 complex which serves as a link between Rab5 and Rab7 protein families in PVCs and mediates PVC maturation. Functionally, essential for trafficking from prevacuolar compartments to vacuoles. Involved in the trafficking of newly synthesized protein to vacuoles. Essential for plant growth. Participates in the recruitment of the core retromer components to the endosomal membrane by interacting with VPS35A. This is Ras-related protein RABG3f (RABG3F) from Arabidopsis thaliana (Mouse-ear cress).